We begin with the raw amino-acid sequence, 324 residues long: Mitochondrial oxaloacetate transport protein (324 aa).

Solcar repeat units lie at residues I20–S111, Q126–I218, and D227–L312. 6 helical membrane-spanning segments follow: residues F26 to I46, G79 to G99, V132 to V152, G193 to N213, L233 to I253, and L284 to F305.

It belongs to the mitochondrial carrier (TC 2.A.29) family.

Its subcellular location is the mitochondrion inner membrane. The catalysed reaction is a dicarboxylate(in) + sulfate(out) = a dicarboxylate(out) + sulfate(in). It carries out the reaction (2S)-2-isopropylmalate(in) + sulfate(out) = (2S)-2-isopropylmalate(out) + sulfate(in). The enzyme catalyses (2R,3S)-3-isopropylmalate(in) + sulfate(out) = (2R,3S)-3-isopropylmalate(out) + sulfate(in). It catalyses the reaction malonate(in) + sulfate(out) = malonate(out) + sulfate(in). The catalysed reaction is oxaloacetate(in) + sulfate(out) = oxaloacetate(out) + sulfate(in). It carries out the reaction thiosulfate(in) + sulfate(out) = thiosulfate(out) + sulfate(in). Inhibited by alpha-keto isocaproate, an intermediate of leucine biosynthesis pathway. In terms of biological role, antiporter that exchanges dicarboxylates and sulfur oxoanions across the inner membrane of mitochondria. Exports alpha-isopropylmalate from mitochondrial matrix to the cytosol, where it serves as a precursor for leucine biosynthesis. This Saccharomyces cerevisiae (strain ATCC 204508 / S288c) (Baker's yeast) protein is Mitochondrial oxaloacetate transport protein (OAC1).